The following is a 265-amino-acid chain: Inositol monophosphatase 2 (265 aa).

Residues E65, D86, L88, and D89 each contribute to the Mg(2+) site. E65 contributes to the substrate binding site. Residues 88–91, 189–191, E208, and D216 contribute to the substrate site; these read LDGT and GSC. Mg(2+) is bound at residue D216.

It belongs to the inositol monophosphatase superfamily. Mg(2+) serves as cofactor. As to expression, low expression in roots, stems, leaves, flowers and young and mature green fruits. Expressed in the stem/leaf junctions, below the shoot apex and on the abaxial side of the petiole of the first expanded leaflets.

The enzyme catalyses a myo-inositol phosphate + H2O = myo-inositol + phosphate. It participates in polyol metabolism; myo-inositol biosynthesis; myo-inositol from D-glucose 6-phosphate: step 2/2. In terms of biological role, responsible for the provision of inositol required for synthesis of phosphatidylinositol and polyphosphoinositides. This is Inositol monophosphatase 2 (IMP2) from Solanum lycopersicum (Tomato).